We begin with the raw amino-acid sequence, 881 residues long: Valine--tRNA ligase (881 aa).

The 'HIGH' region signature appears at 49-59 (PNVTGKLHLGH). The 'KMSKS' region motif lies at 526-530 (KMSKS). Residue K529 participates in ATP binding. Residues 810-881 (LADLINLDEE…VRQRLADLEK (72 aa)) are a coiled coil.

The protein belongs to the class-I aminoacyl-tRNA synthetase family. ValS type 1 subfamily. Monomer.

Its subcellular location is the cytoplasm. The enzyme catalyses tRNA(Val) + L-valine + ATP = L-valyl-tRNA(Val) + AMP + diphosphate. Catalyzes the attachment of valine to tRNA(Val). As ValRS can inadvertently accommodate and process structurally similar amino acids such as threonine, to avoid such errors, it has a 'posttransfer' editing activity that hydrolyzes mischarged Thr-tRNA(Val) in a tRNA-dependent manner. This chain is Valine--tRNA ligase, found in Bacillus cereus (strain ATCC 14579 / DSM 31 / CCUG 7414 / JCM 2152 / NBRC 15305 / NCIMB 9373 / NCTC 2599 / NRRL B-3711).